The following is an 86-amino-acid chain: Small ribosomal subunit protein bS18 (86 aa).

Belongs to the bacterial ribosomal protein bS18 family. Part of the 30S ribosomal subunit. Forms a tight heterodimer with protein bS6.

In terms of biological role, binds as a heterodimer with protein bS6 to the central domain of the 16S rRNA, where it helps stabilize the platform of the 30S subunit. The protein is Small ribosomal subunit protein bS18 of Herpetosiphon aurantiacus (strain ATCC 23779 / DSM 785 / 114-95).